A 694-amino-acid polypeptide reads, in one-letter code: Elongation factor G (694 aa).

The tr-type G domain maps to 8–287; sequence EDYRNFGIMA…AVVSYLPSPI (280 aa). GTP-binding positions include 17–24, 86–90, and 140–143; these read AHIDAGKT, DTPGH, and NKMD.

It belongs to the TRAFAC class translation factor GTPase superfamily. Classic translation factor GTPase family. EF-G/EF-2 subfamily.

It localises to the cytoplasm. Catalyzes the GTP-dependent ribosomal translocation step during translation elongation. During this step, the ribosome changes from the pre-translocational (PRE) to the post-translocational (POST) state as the newly formed A-site-bound peptidyl-tRNA and P-site-bound deacylated tRNA move to the P and E sites, respectively. Catalyzes the coordinated movement of the two tRNA molecules, the mRNA and conformational changes in the ribosome. In Bartonella tribocorum (strain CIP 105476 / IBS 506), this protein is Elongation factor G.